The sequence spans 351 residues: MSKIVLDNVRKSYGGNIEVIKGVSLEIADGEFVVLVGPSGCGKSTLLRMIAGLESITSGTISIGERVVNNVEPAERDIAMVFQNYALYPHMTVRENLAYGLKNRKTPKEEIERRIAKAAKALEIEQFLERKPRQLSGGQRQRVAMGRAIVREPAAFLFDEPLSNLDAKLRVQMRVEIKRLQRSLGTTSVYVTHDQMEAMTMADRLVVLNAGHIEQVGTPIELYEKPASTFVATFIGSPSMNLLQSPESAAWQPGRAITLPSGGYTFGVRPEDIRILEEGDQDADGFNAQVRIEAVELVGAESYIHAALSDGKPLIFRVAGRSTHNIDEMVRVGASATDVHIFGADGRRVSD.

Residues 4–235 (IVLDNVRKSY…PASTFVATFI (232 aa)) enclose the ABC transporter domain. Residue 37–44 (GPSGCGKS) participates in ATP binding.

This sequence belongs to the ABC transporter superfamily. sn-glycerol-3-phosphate importer (TC 3.A.1.1.3) family. In terms of assembly, the complex is composed of two ATP-binding proteins (UgpC), two transmembrane proteins (UgpA and UgpE) and a solute-binding protein (UgpB).

The protein localises to the cell inner membrane. The enzyme catalyses sn-glycerol 3-phosphate(out) + ATP + H2O = sn-glycerol 3-phosphate(in) + ADP + phosphate + H(+). Part of the ABC transporter complex UgpBAEC involved in sn-glycerol-3-phosphate (G3P) import. Responsible for energy coupling to the transport system. This is sn-glycerol-3-phosphate import ATP-binding protein UgpC from Brucella abortus biovar 1 (strain 9-941).